The chain runs to 501 residues: ATP synthase subunit alpha (501 aa).

Position 169–176 (169–176 (GDRQTGKT)) interacts with ATP.

Belongs to the ATPase alpha/beta chains family. F-type ATPases have 2 components, CF(1) - the catalytic core - and CF(0) - the membrane proton channel. CF(1) has five subunits: alpha(3), beta(3), gamma(1), delta(1), epsilon(1). CF(0) has three main subunits: a(1), b(2) and c(9-12). The alpha and beta chains form an alternating ring which encloses part of the gamma chain. CF(1) is attached to CF(0) by a central stalk formed by the gamma and epsilon chains, while a peripheral stalk is formed by the delta and b chains.

It is found in the cell membrane. The enzyme catalyses ATP + H2O + 4 H(+)(in) = ADP + phosphate + 5 H(+)(out). Produces ATP from ADP in the presence of a proton gradient across the membrane. The alpha chain is a regulatory subunit. This Streptococcus uberis (strain ATCC BAA-854 / 0140J) protein is ATP synthase subunit alpha.